The following is a 465-amino-acid chain: GTPase Der (465 aa).

2 consecutive EngA-type G domains span residues 3–167 and 179–352; these read PLVA…PERS and IHIA…VSAL. GTP contacts are provided by residues 9–16, 57–61, 119–122, 185–192, 232–236, and 297–300; these read GRPNVGKS, DTGGM, NKID, DTAGL, and NKWD. Residues 353-437 form the KH-like domain; sequence RQFSTSEVNK…PVRFLFREGD (85 aa).

It belongs to the TRAFAC class TrmE-Era-EngA-EngB-Septin-like GTPase superfamily. EngA (Der) GTPase family. In terms of assembly, associates with the 50S ribosomal subunit.

Functionally, GTPase that plays an essential role in the late steps of ribosome biogenesis. This Xylella fastidiosa (strain M12) protein is GTPase Der.